The sequence spans 284 residues: NH(3)-dependent NAD(+) synthetase (284 aa).

ATP is bound at residue 41–48; it reads GLSGGVDS. Position 47 (D47) interacts with Mg(2+). R127 serves as a coordination point for deamido-NAD(+). T147 serves as a coordination point for ATP. E152 is a Mg(2+) binding site. D167 contacts deamido-NAD(+). Residues K176 and S199 each coordinate ATP. The disordered stretch occupies residues 264–284; that stretch reads FKRRPAPGLDLPEPEDPAMSG. Residues 275 to 284 show a composition bias toward acidic residues; that stretch reads PEPEDPAMSG.

Belongs to the NAD synthetase family. Homodimer.

It carries out the reaction deamido-NAD(+) + NH4(+) + ATP = AMP + diphosphate + NAD(+) + H(+). The protein operates within cofactor biosynthesis; NAD(+) biosynthesis; NAD(+) from deamido-NAD(+) (ammonia route): step 1/1. Catalyzes the ATP-dependent amidation of deamido-NAD to form NAD. Uses ammonia as a nitrogen source. This chain is NH(3)-dependent NAD(+) synthetase, found in Methanopyrus kandleri (strain AV19 / DSM 6324 / JCM 9639 / NBRC 100938).